Reading from the N-terminus, the 264-residue chain is Thymidylate synthase (264 aa).

DUMP is bound at residue R21. H51 contributes to the (6R)-5,10-methylene-5,6,7,8-tetrahydrofolate binding site. 126–127 (RR) provides a ligand contact to dUMP. The active-site Nucleophile is the C146. DUMP-binding positions include 166–169 (RSAD), N177, and 207–209 (HIY). A (6R)-5,10-methylene-5,6,7,8-tetrahydrofolate-binding site is contributed by D169. A263 is a binding site for (6R)-5,10-methylene-5,6,7,8-tetrahydrofolate.

It belongs to the thymidylate synthase family. Bacterial-type ThyA subfamily. In terms of assembly, homodimer.

Its subcellular location is the cytoplasm. The enzyme catalyses dUMP + (6R)-5,10-methylene-5,6,7,8-tetrahydrofolate = 7,8-dihydrofolate + dTMP. The protein operates within pyrimidine metabolism; dTTP biosynthesis. Its function is as follows. Catalyzes the reductive methylation of 2'-deoxyuridine-5'-monophosphate (dUMP) to 2'-deoxythymidine-5'-monophosphate (dTMP) while utilizing 5,10-methylenetetrahydrofolate (mTHF) as the methyl donor and reductant in the reaction, yielding dihydrofolate (DHF) as a by-product. This enzymatic reaction provides an intracellular de novo source of dTMP, an essential precursor for DNA biosynthesis. The chain is Thymidylate synthase from Cupriavidus metallidurans (strain ATCC 43123 / DSM 2839 / NBRC 102507 / CH34) (Ralstonia metallidurans).